We begin with the raw amino-acid sequence, 138 residues long: Small ribosomal subunit protein uS11 (138 aa).

Disordered stretches follow at residues 1–29 (MPPK…PHGA) and 117–138 (GAIS…RRRV). Basic residues predominate over residues 13-22 (KGQKTRRREK).

The protein belongs to the universal ribosomal protein uS11 family. Part of the 30S ribosomal subunit. Interacts with proteins S7 and S18. Binds to IF-3.

In terms of biological role, located on the platform of the 30S subunit, it bridges several disparate RNA helices of the 16S rRNA. Forms part of the Shine-Dalgarno cleft in the 70S ribosome. This chain is Small ribosomal subunit protein uS11, found in Mycobacterium ulcerans (strain Agy99).